The sequence spans 500 residues: Lysine--tRNA ligase (500 aa).

The Mg(2+) site is built by Glu410 and Glu417.

The protein belongs to the class-II aminoacyl-tRNA synthetase family. In terms of assembly, homodimer. The cofactor is Mg(2+).

It is found in the cytoplasm. The catalysed reaction is tRNA(Lys) + L-lysine + ATP = L-lysyl-tRNA(Lys) + AMP + diphosphate. The sequence is that of Lysine--tRNA ligase from Pseudomonas putida (strain ATCC 47054 / DSM 6125 / CFBP 8728 / NCIMB 11950 / KT2440).